We begin with the raw amino-acid sequence, 101 residues long: Small ribosomal subunit protein uS14 (101 aa).

The protein belongs to the universal ribosomal protein uS14 family. As to quaternary structure, part of the 30S ribosomal subunit. Contacts proteins S3 and S10.

In terms of biological role, binds 16S rRNA, required for the assembly of 30S particles and may also be responsible for determining the conformation of the 16S rRNA at the A site. The polypeptide is Small ribosomal subunit protein uS14 (Cupriavidus pinatubonensis (strain JMP 134 / LMG 1197) (Cupriavidus necator (strain JMP 134))).